Reading from the N-terminus, the 118-residue chain is Large ribosomal subunit protein uL18 (118 aa).

It belongs to the universal ribosomal protein uL18 family. In terms of assembly, part of the 50S ribosomal subunit; part of the 5S rRNA/L5/L18/L25 subcomplex. Contacts the 5S and 23S rRNAs.

In terms of biological role, this is one of the proteins that bind and probably mediate the attachment of the 5S RNA into the large ribosomal subunit, where it forms part of the central protuberance. This is Large ribosomal subunit protein uL18 from Zymomonas mobilis subsp. mobilis (strain ATCC 31821 / ZM4 / CP4).